The primary structure comprises 121 residues: Cell division protein FtsL (121 aa).

Over 1 to 34 (MISRVTEALSKVKGSMGSHERHALPGVIGDDLLR) the chain is Cytoplasmic. A helical membrane pass occupies residues 35-57 (FGKLPLCLFICIILTAVTVVTTA). Residues 58–121 (HHTRLLTAQR…PSQENIVVQK (64 aa)) are Periplasmic-facing.

This sequence belongs to the FtsL family. In terms of assembly, part of a complex composed of FtsB, FtsL and FtsQ.

The protein resides in the cell inner membrane. Its function is as follows. Essential cell division protein. May link together the upstream cell division proteins, which are predominantly cytoplasmic, with the downstream cell division proteins, which are predominantly periplasmic. This Shigella dysenteriae serotype 1 (strain Sd197) protein is Cell division protein FtsL.